A 113-amino-acid chain; its full sequence is ATP-dependent Clp protease adapter protein ClpS (113 aa).

The interval 1-26 is disordered; it reads MLMQPLMMSDNPDDESDLGLLTKTRP.

It belongs to the ClpS family. As to quaternary structure, binds to the N-terminal domain of the chaperone ClpA.

Its function is as follows. Involved in the modulation of the specificity of the ClpAP-mediated ATP-dependent protein degradation. In Ruegeria sp. (strain TM1040) (Silicibacter sp.), this protein is ATP-dependent Clp protease adapter protein ClpS.